The following is a 1167-amino-acid chain: C5a peptidase (1167 aa).

An N-terminal signal peptide occupies residues 1-31 (MRKKQKLPFDKLAIALMSTSILLNAQSDIKA). Over residues 34 to 52 (VTEDTPVTEQAVETPQPTA) the composition is skewed to polar residues. Residues 34 to 73 (VTEDTPVTEQAVETPQPTAVSEEVPSSKETKTPQTPDDAE) are disordered. A Peptidase S8 domain is found at 99–581 (KATIRDLNDP…AGAVDAKKAS (483 aa)). Residues D130, H193, and S512 each act as charge relay system in the active site. The tract at residues 1029 to 1133 (EGHSNKPEQD…RDQLPTTNDK (105 aa)) is disordered. Repeat copies occupy residues 1034–1050 (KPEQDGSGQTPDKKPEA), 1051–1067 (KPEQDGSDQAPDKKPEA), 1068–1084 (KPEQDGSGQTPDKKPET), and 1085–1101 (KPEKDSSGQTPGKTPQK). Residues 1034 to 1101 (KPEQDGSGQT…GQTPGKTPQK (68 aa)) form a 4 X 17 AA tandem repeats region. Composition is skewed to basic and acidic residues over residues 1044 to 1071 (PDKKPEAKPEQDGSDQAPDKKPEAKPEQ) and 1078 to 1090 (PDKKPETKPEKDS). 2 stretches are compositionally biased toward polar residues: residues 1092 to 1106 (GQTPGKTPQKGQPSR) and 1120 to 1130 (KASTRDQLPTT). The LPXTG sorting signal signature appears at 1127–1131 (LPTTN). T1130 carries the pentaglycyl murein peptidoglycan amidated threonine modification. A propeptide spans 1131 to 1167 (NDKDTNRLHLLKLVMTTFFFGLVAHIFKTKRQKETKK) (removed by sortase).

It belongs to the peptidase S8 family. In terms of processing, cleaved by SpeB protease; leading to its degradation. Degradation by SpeB is probably strictly regulated to preserve integrity of C5a peptidase.

Its subcellular location is the secreted. The protein resides in the cell wall. It catalyses the reaction The primary cleavage site is at 67-His-|-Lys-68 in human C5a with a minor secondary cleavage site at 58-Ala-|-Ser-59.. This virulence factor of S.pyogenes specifically cleaves the human serum chemotaxin C5a at '68-Lys-|-Asp-69' bond near its C-terminus, destroying its ability to serve as a chemoattractant. This chain is C5a peptidase (scpA), found in Streptococcus pyogenes.